We begin with the raw amino-acid sequence, 652 residues long: Trypanothione synthetase (652 aa).

The Peptidase C51 domain maps to 34–174; it reads SNKHDHFFSG…QHKDGVWTII (141 aa). 328–330 is a binding site for ATP; it reads RFD. The Mg(2+) site is built by aspartate 330, glutamate 344, and asparagine 346. ATP-binding positions include lysine 513, lysine 548, glycine 555, glutamine 583, and 618-620; that span reads IIT.

It in the C-terminal section; belongs to the glutathionylspermidine synthase preATP-grasp family. It depends on Mg(2+) as a cofactor. Post-translationally, the N-terminus is blocked.

It catalyses the reaction spermidine + glutathione + ATP = glutathionylspermidine + ADP + phosphate + H(+). The catalysed reaction is glutathionylspermidine + glutathione + ATP = trypanothione + ADP + phosphate + H(+). In terms of biological role, conjugates glutathione (gamma-Glu-Cys-Gly) and glutathionylspermidine to form trypanothione (N(1),N(8)-bis(glutathionyl)spermidine), which is involved in maintaining intracellular thiol redox and in defense against oxidants. The polypeptide is Trypanothione synthetase (TRS) (Crithidia fasciculata).